We begin with the raw amino-acid sequence, 146 residues long: Angiogenin (146 aa).

Positions 1-24 (MVMGLHLLFLVFILGLGLTPPTLA) are cleaved as a signal peptide. Gln-25 is subject to Pyrrolidone carboxylic acid. His-37 functions as the Proton acceptor in the catalytic mechanism. Intrachain disulfides connect Cys-50–Cys-105, Cys-63–Cys-116, and Cys-81–Cys-131. A Nucleolar localization signal motif is present at residues 55 to 59 (RLRNM). Positions 105 and 127 each coordinate tRNA. His-138 (proton donor) is an active-site residue.

Belongs to the pancreatic ribonuclease family. In terms of assembly, homodimer. Interacts with RNH1; inhibiting ANG ribonuclease activity. Interacts with PCNA.

The protein localises to the secreted. Its subcellular location is the nucleus. It localises to the nucleolus. The protein resides in the cytoplasm. It is found in the stress granule. Its activity is regulated as follows. Has weak tRNA ribonuclease activity by itself due to partial autoinhibition by its C-terminus, which folds into a short alpha-helix that partially occludes the substrate-binding site. In absence of stress, the ribonuclease activity is inhibited by RNH1 in the cytoplasm. In response to stress, dissociates from RNH1 in the cytoplasm and associates with cytoplasmic ribosomes with vacant A-sites: ribosomes directly activate the tRNA ribonuclease activity of ANG by refolding the C-terminal alpha-helix. In response to stress, the angiogenic activity of ANG is inhibited by RNH1 in the nucleus. Secreted ribonuclease that can either promote or restrict cell proliferation of target cells, depending on the context. Endocytosed in target cells via its receptor PLXNB2 and translocates to the cytoplasm or nucleus. Under stress conditions, localizes to the cytoplasm and promotes the assembly of stress granules (SGs): specifically cleaves a subset of tRNAs within anticodon loops to produce tRNA-derived stress-induced fragments (tiRNAs), resulting in translation repression and inhibition of cell proliferation. tiRNas also prevent formation of apoptosome, thereby promoting cell survival. Preferentially cleaves RNAs between a pyrimidine and an adenosine residue, suggesting that it cleaves the anticodon loop of tRNA(Ala) (32-UUAGCAU-38) after positions 33 and 36. Cleaves a subset of tRNAs, including tRNA(Ala), tRNA(Glu), tRNA(Gly), tRNA(Lys), tRNA(Val), tRNA(His), tRNA(Asp) and tRNA(Sec). Under growth conditions and in differentiated cells, translocates to the nucleus and stimulates ribosomal RNA (rRNA) transcription, including that containing the initiation site sequences of 45S rRNA, thereby promoting cell growth and proliferation. Angiogenin induces vascularization of normal and malignant tissues via its ability to promote rRNA transcription. Involved in hematopoietic stem and progenitor cell (HSPC) growth and survival by promoting rRNA transcription in growth conditions and inhibiting translation in response to stress, respectively. Mediates the crosstalk between myeloid and intestinal epithelial cells to protect the intestinal epithelial barrier integrity: secreted by myeloid cells and promotes intestinal epithelial cells proliferation and survival. Also mediates osteoclast-endothelial cell crosstalk in growing bone: produced by osteoclasts and protects the neighboring vascular cells against senescence by promoting rRNA transcription. This is Angiogenin (ANG) from Saguinus oedipus (Cotton-top tamarin).